A 366-amino-acid polypeptide reads, in one-letter code: tRNA(Met) cytidine acetate ligase (366 aa).

ATP-binding positions include 7–20, Gly-96, Asn-152, and Arg-175; that span reads VAEF…HKYL.

It belongs to the TmcAL family.

Its subcellular location is the cytoplasm. The catalysed reaction is cytidine(34) in elongator tRNA(Met) + acetate + ATP = N(4)-acetylcytidine(34) in elongator tRNA(Met) + AMP + diphosphate. Functionally, catalyzes the formation of N(4)-acetylcytidine (ac(4)C) at the wobble position of elongator tRNA(Met), using acetate and ATP as substrates. First activates an acetate ion to form acetyladenylate (Ac-AMP) and then transfers the acetyl group to tRNA to form ac(4)C34. This is tRNA(Met) cytidine acetate ligase from Streptococcus uberis (strain ATCC BAA-854 / 0140J).